A 144-amino-acid polypeptide reads, in one-letter code: Transcriptional regulator SlyA (144 aa).

Positions 2–135 constitute an HTH marR-type domain; sequence ESPLGSDLAR…LITLIAKLEH (134 aa). Residues 49-72 constitute a DNA-binding region (H-T-H motif); that stretch reads QIQLAKAIGIEQPSLVRTLDQLEE.

The protein belongs to the SlyA family. Homodimer.

Its function is as follows. Transcription regulator that can specifically activate or repress expression of target genes. The chain is Transcriptional regulator SlyA from Shigella boydii serotype 18 (strain CDC 3083-94 / BS512).